A 938-amino-acid chain; its full sequence is AP-4 complex subunit epsilon (938 aa).

HEAT repeat units lie at residues 118–153 (DLII…INEE), 154–190 (TIPA…KSPS), 192–227 (VSHL…EDVN), 234–272 (SSFV…IMAL), 321–358 (KLLE…ISPD), 359–395 (IAEQ…SSNV), 397–431 (VIVD…QFAP), 454–495 (KVAH…EPKL), 517–556 (YSAS…FEIA), and 562–601 (DVLP…RAVE). 4 disordered regions span residues 690 to 712 (EPSY…RESS), 725 to 867 (WGRP…VMGL), 880 to 912 (VDSL…KEAL), and 919 to 938 (RQMG…DLLG). The span at 694–706 (YSESHQPISTSLV) shows a compositional bias: polar residues. Over residues 728 to 744 (PSYQSTTAASSTTPQAA) the composition is skewed to low complexity. Basic and acidic residues predominate over residues 764–779 (SSYEPKKPEIDPEKQR). Polar residues predominate over residues 808-821 (ANKTATVPKENQTP). Composition is skewed to low complexity over residues 853–863 (DSSSQDGGSSD) and 880–891 (VDSLLSELSDSS). An HEAT 11 repeat occupies 874–911 (VTTTTSVDSLLSELSDSSKGNSRTYQPQTSKGPNTKEA). Residues 892–906 (KGNSRTYQPQTSKGP) are compositionally biased toward polar residues.

It belongs to the adaptor complexes large subunit family. In terms of assembly, adaptor protein complex 4 (AP-4) is a heterotetramer composed of two large adaptins (epsilon-type subunit and beta-type subunit), a medium adaptin (mu-type subunit) and a small adaptin (sigma-type subunit).

The protein localises to the golgi apparatus. It is found in the trans-Golgi network. The protein resides in the membrane. It localises to the coated pit. In terms of biological role, subunit of novel type of clathrin- or non-clathrin-associated protein coat involved in targeting proteins from the trans-Golgi network (TGN) to the endosomal-lysosomal system. The polypeptide is AP-4 complex subunit epsilon (Arabidopsis thaliana (Mouse-ear cress)).